We begin with the raw amino-acid sequence, 381 residues long: Hps1-dma1 cluster transcription factor tfc7 (381 aa).

Residues Cys-10–Cys-37 constitute a DNA-binding region (zn(2)-C6 fungal-type). The segment at Arg-41–Met-88 is disordered. 2 stretches are compositionally biased toward polar residues: residues Arg-50–Ile-59 and Arg-67–Ser-80.

It is found in the nucleus. Functionally, transcription factor that regulates the expression of the hps1-dma1 gene cluster that probably mediates the biosynthesis a derivative of cyclopiazonic acid (CPA). Further studies are required to whether the CPA-like hps1-dma1 cluster is functional or a non-functional relic reflecting evolution of D.septosporum. This Dothistroma septosporum (strain NZE10 / CBS 128990) (Red band needle blight fungus) protein is Hps1-dma1 cluster transcription factor tfc7 (tfc7).